The chain runs to 320 residues: Replication factor C small subunit 2 (320 aa).

44-51 contributes to the ATP binding site; the sequence is GPPGTGKT.

Belongs to the activator 1 small subunits family. RfcS subfamily. In terms of assembly, heteromultimer composed of small subunits (RfcS) and large subunits (RfcL).

In terms of biological role, part of the RFC clamp loader complex which loads the PCNA sliding clamp onto DNA. The protein is Replication factor C small subunit 2 of Pyrobaculum islandicum (strain DSM 4184 / JCM 9189 / GEO3).